The sequence spans 248 residues: MRRPIIAGNWKMHKTPSEAVKLVEELIPLVKDAKAEVVVIPPFVDLTEVARVIKGTNILLGAQNMFWEEKGAYTGEISPVMLKEIGVTYVVIGHSERRQYFKETDEMVNKKVLSALSHDLKPIVCVGESLSQREEGKTYDVVLTQTREALKGVSEEDITKVVIAYEPVWAIGTGKNATPQDANEVIKAIRNTIAELYGKDKAEMVRIQYGGSVKPDNISGFMAESDIDGALVGGASLVAEDFAKIVNY.

9-11 (NWK) provides a ligand contact to substrate. The active-site Electrophile is histidine 94. The active-site Proton acceptor is glutamate 166. Residues glycine 172, serine 212, and 233–234 (GG) each bind substrate.

The protein belongs to the triosephosphate isomerase family. Homodimer.

Its subcellular location is the cytoplasm. The enzyme catalyses D-glyceraldehyde 3-phosphate = dihydroxyacetone phosphate. It functions in the pathway carbohydrate biosynthesis; gluconeogenesis. It participates in carbohydrate degradation; glycolysis; D-glyceraldehyde 3-phosphate from glycerone phosphate: step 1/1. Functionally, involved in the gluconeogenesis. Catalyzes stereospecifically the conversion of dihydroxyacetone phosphate (DHAP) to D-glyceraldehyde-3-phosphate (G3P). This chain is Triosephosphate isomerase, found in Caldanaerobacter subterraneus subsp. tengcongensis (strain DSM 15242 / JCM 11007 / NBRC 100824 / MB4) (Thermoanaerobacter tengcongensis).